Consider the following 249-residue polypeptide: Adapter protein MecA (249 aa).

Belongs to the MecA family. As to quaternary structure, homodimer.

In terms of biological role, enables the recognition and targeting of unfolded and aggregated proteins to the ClpC protease or to other proteins involved in proteolysis. The protein is Adapter protein MecA of Streptococcus thermophilus (strain ATCC BAA-491 / LMD-9).